The primary structure comprises 171 residues: MDRAEKAEAVSSLNATLSNAASVVIVRNLGLTVAQSTVLRQQMRDAGANFRVTKNRLAKIALDGTSYTGIGELLTGPTAIASSTDPVAAAKIAVEFAKTNDKLEIVGGGMGDVILDVEGVKALASLPSLDELRGKLVGLLQAPATKVAQIAAAPAGQLARVFGAYGAKEAA.

It belongs to the universal ribosomal protein uL10 family. Part of the ribosomal stalk of the 50S ribosomal subunit. The N-terminus interacts with L11 and the large rRNA to form the base of the stalk. The C-terminus forms an elongated spine to which L12 dimers bind in a sequential fashion forming a multimeric L10(L12)X complex.

In terms of biological role, forms part of the ribosomal stalk, playing a central role in the interaction of the ribosome with GTP-bound translation factors. This Sphingopyxis alaskensis (strain DSM 13593 / LMG 18877 / RB2256) (Sphingomonas alaskensis) protein is Large ribosomal subunit protein uL10.